The chain runs to 547 residues: Cytochrome P450 78A1 (547 aa).

The segment covering 84–94 (ASSRCPGAAAP) has biased composition (low complexity). The tract at residues 84–104 (ASSRCPGAAAPRPRRDGPRRR) is disordered. Residue Cys490 coordinates heme.

This sequence belongs to the cytochrome P450 family. Requires heme as cofactor. Shoot apex.

This is Cytochrome P450 78A1 (CYP78A1) from Zea mays (Maize).